Reading from the N-terminus, the 557-residue chain is Inositol-3-phosphate synthase 1 (557 aa).

Positions 67, 68, 69, 70, 141, 177, 178, 188, 191, 228, 229, 230, 231, 278, 279, 303, 306, 337, 338, 339, and 352 each coordinate NAD(+). S279 carries the post-translational modification Phosphoserine. Position 357 is a phosphoserine (S357). NAD(+)-binding residues include G390, D391, D419, and S420. S523 carries the phosphoserine modification. Positions 527–557 (CKKGSAPTAPNGCTGDANGHSQAEAPQMPTT) are disordered.

Belongs to the myo-inositol 1-phosphate synthase family. Requires NAD(+) as cofactor. As to expression, expressed in testis (at protein level).

It localises to the cytoplasm. It carries out the reaction D-glucose 6-phosphate = 1D-myo-inositol 3-phosphate. The protein operates within polyol metabolism; myo-inositol biosynthesis; myo-inositol from D-glucose 6-phosphate: step 1/2. Its function is as follows. Key enzyme in myo-inositol biosynthesis pathway that catalyzes the conversion of glucose 6-phosphate to 1-myo-inositol 1-phosphate in a NAD-dependent manner. Rate-limiting enzyme in the synthesis of all inositol-containing compounds. This chain is Inositol-3-phosphate synthase 1 (ISYNA1), found in Bos taurus (Bovine).